A 722-amino-acid chain; its full sequence is Polyribonucleotide nucleotidyltransferase (722 aa).

The Mg(2+) site is built by Asp487 and Asp493. The region spanning 554–613 (PRIETFKIPTDKIREVIGTGGKVIREIVEKTGAKVNIEDDGTVKVASSDGESIKAAIKWI) is the KH domain. Positions 623–691 (GEIYEGTVVK…DRGKTRLSMK (69 aa)) constitute an S1 motif domain. The interval 697–722 (TGEDLEAKQKAEAKAEGEAPAQAAGE) is disordered. The span at 701–713 (LEAKQKAEAKAEG) shows a compositional bias: basic and acidic residues.

This sequence belongs to the polyribonucleotide nucleotidyltransferase family. Mg(2+) serves as cofactor.

It is found in the cytoplasm. It carries out the reaction RNA(n+1) + phosphate = RNA(n) + a ribonucleoside 5'-diphosphate. Its function is as follows. Involved in mRNA degradation. Catalyzes the phosphorolysis of single-stranded polyribonucleotides processively in the 3'- to 5'-direction. In Rhodopseudomonas palustris (strain TIE-1), this protein is Polyribonucleotide nucleotidyltransferase.